The chain runs to 212 residues: Large ribosomal subunit protein uL3 (212 aa).

Gln153 bears the N5-methylglutamine mark.

The protein belongs to the universal ribosomal protein uL3 family. As to quaternary structure, part of the 50S ribosomal subunit. Forms a cluster with proteins L14 and L19. Post-translationally, methylated by PrmB.

Functionally, one of the primary rRNA binding proteins, it binds directly near the 3'-end of the 23S rRNA, where it nucleates assembly of the 50S subunit. This is Large ribosomal subunit protein uL3 from Shewanella loihica (strain ATCC BAA-1088 / PV-4).